The following is a 498-amino-acid chain: tRNA-2-methylthio-N(6)-dimethylallyladenosine synthase (498 aa).

Residues 2–118 enclose the MTTase N-terminal domain; the sequence is PRYSITTFGC…LPGLLGDLAI (117 aa). Residues C11, C47, C81, C163, C167, and C170 each contribute to the [4Fe-4S] cluster site. The region spanning 149–393 is the Radical SAM core domain; it reads PRAAPTAFVT…FEESEALLAA (245 aa). One can recognise a TRAM domain in the interval 396–467; sequence SALVGTTQEV…KHSLQAELTE (72 aa). The tract at residues 469 to 498 is disordered; the sequence is ARAAARPRQRGGLEPRPARRSLPVVAAEGG.

Belongs to the methylthiotransferase family. MiaB subfamily. In terms of assembly, monomer. Requires [4Fe-4S] cluster as cofactor.

Its subcellular location is the cytoplasm. The enzyme catalyses N(6)-dimethylallyladenosine(37) in tRNA + (sulfur carrier)-SH + AH2 + 2 S-adenosyl-L-methionine = 2-methylsulfanyl-N(6)-dimethylallyladenosine(37) in tRNA + (sulfur carrier)-H + 5'-deoxyadenosine + L-methionine + A + S-adenosyl-L-homocysteine + 2 H(+). In terms of biological role, catalyzes the methylthiolation of N6-(dimethylallyl)adenosine (i(6)A), leading to the formation of 2-methylthio-N6-(dimethylallyl)adenosine (ms(2)i(6)A) at position 37 in tRNAs that read codons beginning with uridine. The chain is tRNA-2-methylthio-N(6)-dimethylallyladenosine synthase from Sorangium cellulosum (strain So ce56) (Polyangium cellulosum (strain So ce56)).